We begin with the raw amino-acid sequence, 397 residues long: Lysophospholipid transporter LplT (397 aa).

11 helical membrane passes run 16 to 36, 53 to 73, 91 to 111, 139 to 159, 164 to 184, 227 to 247, 253 to 273, 281 to 301, 305 to 325, 352 to 372, and 373 to 393; these read MLAVICAQFLSAFGDNALLFA, VLQMLFVGAYILFAPFVGQFA, LGAGCICFGVNPFIGYTLVGI, LMESSTIAAILLGSMAGGILA, LAALIVCALVYGGAVVANLWI, LFWGAGVTLRFLLVIWVPVAL, AMPTYLNAMVAVGIVLGAGAA, TVSRCMPAGILIGIAVMAFAV, LLPAFGLLLLLGVFGGFFIVP, NVAMLLMLGLYSLAVSVGVPP, and VAVGIGFGAVFAVAIAALWVW.

The protein belongs to the major facilitator superfamily. LplT (TC 2.A.1.42) family.

It is found in the cell inner membrane. Its function is as follows. Catalyzes the facilitated diffusion of 2-acyl-glycero-3-phosphoethanolamine (2-acyl-GPE) into the cell. The polypeptide is Lysophospholipid transporter LplT (Klebsiella pneumoniae (strain 342)).